Consider the following 52-residue polypeptide: Metchnikowin (52 aa).

The first 24 residues, 1–24, serve as a signal peptide directing secretion; that stretch reads MQLNLGAIFLALLGVMATATSVLA. Residues 25–26 constitute a propeptide that is removed on maturation; it reads EP. A disordered region spans residues 28–52; that stretch reads RHQGPIFDTRPSPFNPNQPRPGPIY. Over residues 40–52 the composition is skewed to pro residues; the sequence is PFNPNQPRPGPIY.

As to expression, hemolymph (at protein level). Highest expression in fat body.

It is found in the secreted. In terms of biological role, potent antifungal and antibacterial activity against Gram-positive bacteria. The protein is Metchnikowin (Mtk) of Drosophila melanogaster (Fruit fly).